The chain runs to 130 residues: Small ribosomal subunit protein uS9 (130 aa).

The protein belongs to the universal ribosomal protein uS9 family.

This is Small ribosomal subunit protein uS9 from Variovorax paradoxus (strain S110).